Here is a 218-residue protein sequence, read N- to C-terminus: Ribosomal RNA small subunit methyltransferase G (218 aa).

Residues Gly82, Leu87, Val137–Glu138, and Arg152 contribute to the S-adenosyl-L-methionine site.

It belongs to the methyltransferase superfamily. RNA methyltransferase RsmG family.

The protein localises to the cytoplasm. The catalysed reaction is guanosine(527) in 16S rRNA + S-adenosyl-L-methionine = N(7)-methylguanosine(527) in 16S rRNA + S-adenosyl-L-homocysteine. In terms of biological role, specifically methylates the N7 position of guanine in position 527 of 16S rRNA. In Herminiimonas arsenicoxydans, this protein is Ribosomal RNA small subunit methyltransferase G.